A 580-amino-acid chain; its full sequence is Proline--tRNA ligase (580 aa).

Belongs to the class-II aminoacyl-tRNA synthetase family. ProS type 1 subfamily. In terms of assembly, homodimer.

Its subcellular location is the cytoplasm. The catalysed reaction is tRNA(Pro) + L-proline + ATP = L-prolyl-tRNA(Pro) + AMP + diphosphate. Catalyzes the attachment of proline to tRNA(Pro) in a two-step reaction: proline is first activated by ATP to form Pro-AMP and then transferred to the acceptor end of tRNA(Pro). As ProRS can inadvertently accommodate and process non-cognate amino acids such as alanine and cysteine, to avoid such errors it has two additional distinct editing activities against alanine. One activity is designated as 'pretransfer' editing and involves the tRNA(Pro)-independent hydrolysis of activated Ala-AMP. The other activity is designated 'posttransfer' editing and involves deacylation of mischarged Ala-tRNA(Pro). The misacylated Cys-tRNA(Pro) is not edited by ProRS. The sequence is that of Proline--tRNA ligase from Polynucleobacter necessarius subsp. necessarius (strain STIR1).